Consider the following 305-residue polypeptide: T-cell immunoglobulin and mucin domain-containing protein 2 (305 aa).

A signal peptide spans 1–21; it reads MNQIQVFISGLILLLPGAVES. The Ig-like V-type domain maps to 22-125; sequence HTAVQGLAGH…AFHFVDYMLE (104 aa). At 22-231 the chain is on the extracellular side; sequence HTAVQGLAGH…QKPQKNLNKG (210 aa). 3 disulfide bridges follow: Cys-37–Cys-109, Cys-50–Cys-61, and Cys-56–Cys-108. N-linked (GlcNAc...) asparagine glycosylation is found at Asn-86 and Asn-91. The interval 130–174 is disordered; it reads ISTSPPTRPTATGRPTTISTRSTHVPTSTRVSTSTSPTPAHTETY. A compositionally biased stretch (low complexity) spans 131 to 167; that stretch reads STSPPTRPTATGRPTTISTRSTHVPTSTRVSTSTSPT. A helical transmembrane segment spans residues 232–252; that stretch reads FYVGISIAALLILMLLSTMVI. Topologically, residues 253–305 are cytoplasmic; the sequence is TRYVVMKRKSESLSFVAFPISKIGASPKKVVERTRCEDQVYIIEDTPYPEEES.

The protein belongs to the immunoglobulin superfamily. TIM family. In terms of assembly, homodimer. As to expression, expressed on late differentiated Th2 cells. Expressed also on all splenic B-cells, with increased levels on germinal center B-cells, in the liver, especially in bile duct epithelial cells, and in renal tubule cells. Within retina, mainly expressed in Mueller cells.

The protein localises to the cell membrane. Its function is as follows. Cell surface glycoprotein that participates in iron homeostasis in the liver, the kidney, the retina and oligodendrocytes by acting as a receptor of H-ferritin. Mechanistically, mediates iron-containing ferritin uptake via an endocytic pathway, trafficking to endosomes and subsequently to lysosomes. Plays also an important role in the regulation of Th2 immunity. Receptor for SEMA4A involved in the regulation of T-cell function, enhancing T-cell activation. This Mus musculus (Mouse) protein is T-cell immunoglobulin and mucin domain-containing protein 2 (Timd2).